A 497-amino-acid polypeptide reads, in one-letter code: Probable cytosol aminopeptidase (497 aa).

The Mn(2+) site is built by Lys-263 and Asp-268. Lys-275 is a catalytic residue. Residues Asp-286, Asp-345, and Glu-347 each coordinate Mn(2+). Arg-349 is a catalytic residue.

It belongs to the peptidase M17 family. Requires Mn(2+) as cofactor.

Its subcellular location is the cytoplasm. The catalysed reaction is Release of an N-terminal amino acid, Xaa-|-Yaa-, in which Xaa is preferably Leu, but may be other amino acids including Pro although not Arg or Lys, and Yaa may be Pro. Amino acid amides and methyl esters are also readily hydrolyzed, but rates on arylamides are exceedingly low.. It catalyses the reaction Release of an N-terminal amino acid, preferentially leucine, but not glutamic or aspartic acids.. Functionally, presumably involved in the processing and regular turnover of intracellular proteins. Catalyzes the removal of unsubstituted N-terminal amino acids from various peptides. The sequence is that of Probable cytosol aminopeptidase from Methylorubrum extorquens (strain CM4 / NCIMB 13688) (Methylobacterium extorquens).